The chain runs to 683 residues: Methionine--tRNA ligase (683 aa).

The 'HIGH' region motif lies at Pro-15–His-25. Positions 146, 149, 159, and 162 each coordinate Zn(2+). A 'KMSKS' region motif is present at residues Lys-332–Ser-336. Lys-335 contacts ATP. The tRNA-binding domain occupies Asp-582–Met-683.

The protein belongs to the class-I aminoacyl-tRNA synthetase family. MetG type 1 subfamily. In terms of assembly, homodimer. Zn(2+) is required as a cofactor.

The protein resides in the cytoplasm. It carries out the reaction tRNA(Met) + L-methionine + ATP = L-methionyl-tRNA(Met) + AMP + diphosphate. In terms of biological role, is required not only for elongation of protein synthesis but also for the initiation of all mRNA translation through initiator tRNA(fMet) aminoacylation. The protein is Methionine--tRNA ligase of Vibrio cholerae serotype O1 (strain ATCC 39541 / Classical Ogawa 395 / O395).